A 123-amino-acid polypeptide reads, in one-letter code: MADVAKLCDELLALTILEAKELNDLLEEKGIKAAAAVAVAGPAGGGDAPAAEEKDEFDVVLTGAGDKKINVIKEVRAITGLGLKEAKDLVEGAPKAVKEAASKTEAEEIKAKLEAAGASVELK.

The protein belongs to the bacterial ribosomal protein bL12 family. Homodimer. Part of the ribosomal stalk of the 50S ribosomal subunit. Forms a multimeric L10(L12)X complex, where L10 forms an elongated spine to which 2 to 4 L12 dimers bind in a sequential fashion. Binds GTP-bound translation factors.

Its function is as follows. Forms part of the ribosomal stalk which helps the ribosome interact with GTP-bound translation factors. Is thus essential for accurate translation. The polypeptide is Large ribosomal subunit protein bL12 (Maricaulis maris (strain MCS10) (Caulobacter maris)).